Reading from the N-terminus, the 53-residue chain is UPF0391 membrane protein Acid_3618 (53 aa).

The next 2 membrane-spanning stretches (helical) occupy residues 6–26 and 28–48; these read LVFLVFALIAAVLGFGGLAGA and VGIAKILFFVFLVIWLVAFLM.

This sequence belongs to the UPF0391 family.

Its subcellular location is the cell membrane. The polypeptide is UPF0391 membrane protein Acid_3618 (Solibacter usitatus (strain Ellin6076)).